The primary structure comprises 130 residues: Small ribosomal subunit protein uS9 (130 aa).

It belongs to the universal ribosomal protein uS9 family.

The chain is Small ribosomal subunit protein uS9 from Shewanella baltica (strain OS155 / ATCC BAA-1091).